A 511-amino-acid chain; its full sequence is GMP synthase [glutamine-hydrolyzing] (511 aa).

Positions 5 to 195 (DILVLDFGSQ…AKYACNCESI (191 aa)) constitute a Glutamine amidotransferase type-1 domain. Cys-82 (nucleophile) is an active-site residue. Catalysis depends on residues His-169 and Glu-171. Residues 196 to 386 (WNMGSFAKTQ…LGLSKEVVYR (191 aa)) form the GMPS ATP-PPase domain. 223–229 (SGGVDSS) lines the ATP pocket.

In terms of assembly, homodimer.

It carries out the reaction XMP + L-glutamine + ATP + H2O = GMP + L-glutamate + AMP + diphosphate + 2 H(+). It functions in the pathway purine metabolism; GMP biosynthesis; GMP from XMP (L-Gln route): step 1/1. In terms of biological role, catalyzes the synthesis of GMP from XMP. This chain is GMP synthase [glutamine-hydrolyzing] (guaA), found in Campylobacter jejuni subsp. jejuni serotype O:2 (strain ATCC 700819 / NCTC 11168).